The primary structure comprises 560 residues: Secreted RxLR effector protein 142 (560 aa).

The first 22 residues, 1-22 (MRRAYFVAIALLVAAGGKTAAG), serve as a signal peptide directing secretion. 2 disordered regions span residues 48 to 73 (QSQN…ERTP) and 354 to 377 (INRP…LNNQ). Residues 54-72 (ESRDPKDDLKLSAGNEERT) show a composition bias toward basic and acidic residues. The RxLR-dEER motif lies at 56 to 71 (RDPKDDLKLSAGNEER). Residues 361–377 (GPSTNGATTSNGGLNNQ) show a composition bias toward polar residues.

Belongs to the RxLR effector family.

It localises to the secreted. The protein localises to the host nucleus. Its function is as follows. Secreted effector that completely suppresses the host cell death induced by cell death-inducing proteins. The polypeptide is Secreted RxLR effector protein 142 (Plasmopara viticola (Downy mildew of grapevine)).